The primary structure comprises 272 residues: uncharacterized protein (272 aa).

Helical transmembrane passes span 20-37 (VYLS…NLLI), 57-77 (HPLT…HFSL), 97-119 (LNVS…IMLM), 155-177 (SIAT…YVIF), 184-203 (LVSL…VTLG), and 234-256 (PYSI…WLVI).

The protein resides in the cell membrane. This is an uncharacterized protein from Halalkalibacterium halodurans (strain ATCC BAA-125 / DSM 18197 / FERM 7344 / JCM 9153 / C-125) (Bacillus halodurans).